The primary structure comprises 801 residues: Mediator of RNA polymerase II transcription subunit 25 (801 aa).

3 stretches are compositionally biased toward low complexity: residues 647–676 (PQQL…QPGA), 687–710 (PQLR…QQPL), and 722–735 (PHQA…HQAP). A disordered region spans residues 647–735 (PQQLASQAPP…MGQQMQHQAP (89 aa)). Positions 689–693 (LRNLL) match the LXXLL motif motif.

This sequence belongs to the Mediator complex subunit 25 family. In terms of assembly, component of the Mediator complex.

It localises to the nucleus. In terms of biological role, component of the Mediator complex, a coactivator involved in the regulated transcription of nearly all RNA polymerase II-dependent genes. Mediator functions as a bridge to convey information from gene-specific regulatory proteins to the basal RNA polymerase II transcription machinery. Mediator is recruited to promoters by direct interactions with regulatory proteins and serves as a scaffold for the assembly of a functional preinitiation complex with RNA polymerase II and the general transcription factors. This is Mediator of RNA polymerase II transcription subunit 25 (med25) from Xenopus laevis (African clawed frog).